The following is a 436-amino-acid chain: [Pyruvate dehydrogenase (acetyl-transferring)] kinase isozyme 1, mitochondrial (436 aa).

Residues 1–28 constitute a mitochondrion transit peptide; it reads MRLARLLRGAALAGPGPGLRAAGFSRSF. Tyr136 carries the phosphotyrosine; by FGFR1 modification. A Histidine kinase domain is found at 163–393; sequence YKESFGVDPV…DAVIYIKALS (231 aa). Tyr243 carries the phosphotyrosine; by FGFR1, ABL1, FLT3 and JAK2 modification. Residue Tyr244 is modified to Phosphotyrosine; by FGFR1. Residues 279–286, Asp318, 337–338, and 354–359 each bind ATP; these read ELFKNAMR, ST, and GFGYGL. At Thr338 the chain carries Phosphothreonine. Lys405 is subject to N6-succinyllysine.

This sequence belongs to the PDK/BCKDK protein kinase family. As to quaternary structure, homodimer, and heterodimer with PDK2. Interacts with the pyruvate dehydrogenase complex subunit DLAT, and is part of the multimeric pyruvate dehydrogenase complex that contains multiple copies of pyruvate dehydrogenase (E1), dihydrolipoamide acetyltransferase (DLAT, E2) and lipoamide dehydrogenase (DLD, E3). Interacts with phosphoglycerate kinase PGK1; the interaction is direct, occurs under hypoxic conditions and leads to PDK1-mediated inhibition of pyruvate dehydrogenase complex activity. Phosphorylated by constitutively activated ABL1, FGFR1, FLT3 and JAK2 (in vitro), and this may also occur in cancer cells that express constitutively activated ABL1, FGFR1, FLT3 and JAK2. Phosphorylation at Tyr-243 and Tyr-244 strongly increases kinase activity, while phosphorylation at Tyr-136 has a lesser effect. Phosphorylated under hypoxic conditions at Thr-338 by phosphoglycerate kinase PGK1 which has an activating effect. Expressed predominantly in the heart. Detected at lower levels in liver, skeletal muscle and pancreas.

It is found in the mitochondrion matrix. The catalysed reaction is L-seryl-[pyruvate dehydrogenase E1 alpha subunit] + ATP = O-phospho-L-seryl-[pyruvate dehydrogenase E1 alpha subunit] + ADP + H(+). Its activity is regulated as follows. Activity is enhanced by binding to the pyruvate dehydrogenase subunit DLAT. Inhibited by AZD7545; this compound interferes with DLAT binding and thereby inhibits kinase activity. Inhibited by dichloroacetate and radicicol. Activated under hypoxic conditions by phosphoglycerate kinase PGK1-mediated phosphorylation at Thr-338. Kinase that plays a key role in regulation of glucose and fatty acid metabolism and homeostasis via phosphorylation of the pyruvate dehydrogenase subunits PDHA1 and PDHA2. This inhibits pyruvate dehydrogenase activity, and thereby regulates metabolite flux through the tricarboxylic acid cycle, down-regulates aerobic respiration and inhibits the formation of acetyl-coenzyme A from pyruvate. Plays an important role in cellular responses to hypoxia and is important for cell proliferation under hypoxia. This Homo sapiens (Human) protein is [Pyruvate dehydrogenase (acetyl-transferring)] kinase isozyme 1, mitochondrial (PDK1).